The primary structure comprises 134 residues: RxLR effector protein Avh238 (134 aa).

Positions 1–21 (MRGVFFVAVAVAIFARSSAEA) are cleaved as a signal peptide. The RxLR-dEER signature appears at 44-68 (RFLRVADPEDDDLAAPADDGKTEER). The segment at 49-70 (ADPEDDDLAAPADDGKTEERAP) is disordered. Positions 61–70 (DDGKTEERAP) are enriched in basic and acidic residues.

Belongs to the RxLR effector family. In terms of assembly, interacts with host 1-aminocyclopropane-1-carboxylate synthases ACS1, ACS2, ACS3, ACS10 and ACS12.

It is found in the secreted. It localises to the host cytoplasm. The protein resides in the host nucleus. Its function is as follows. Effector that suppresses plant defense responses during the early stages of pathogen infection. Suppresses cell death induced by effectors and PAMPs in plant hosts. Is able to induced cell death in tomato, tobacco, eggplant, and potato, but not in A.thaliana. Interacts with and destabilizes host 1-aminocyclopropane-1-carboxylate synthases. By suppressing type2 ACS-catalyzed ethylene biosynthesis, Avh238 facilitates Phytophthora infection. The polypeptide is RxLR effector protein Avh238 (Avh238) (Phytophthora sojae (strain P6497) (Soybean stem and root rot agent)).